The sequence spans 380 residues: Cytochrome b (380 aa).

4 consecutive transmembrane segments (helical) span residues 33-53 (FGSL…FLAM), 77-98 (WLIR…YLHI), 113-133 (WNIG…GYVL), and 178-198 (FFAF…IHLI). Residues His-83 and His-97 each coordinate heme b. Positions 182 and 196 each coordinate heme b. His-201 provides a ligand contact to a ubiquinone. Helical transmembrane passes span 226–246 (YKDL…ALFS), 288–308 (LGGV…PVLH), 320–340 (FSQF…WIGG), and 347–367 (FIII…ILVP).

It belongs to the cytochrome b family. In terms of assembly, the cytochrome bc1 complex contains 3 respiratory subunits (MT-CYB, CYC1 and UQCRFS1), 2 core proteins (UQCRC1 and UQCRC2) and probably 6 low-molecular weight proteins. Requires heme b as cofactor.

The protein localises to the mitochondrion inner membrane. Its function is as follows. Component of the ubiquinol-cytochrome c reductase complex (complex III or cytochrome b-c1 complex) that is part of the mitochondrial respiratory chain. The b-c1 complex mediates electron transfer from ubiquinol to cytochrome c. Contributes to the generation of a proton gradient across the mitochondrial membrane that is then used for ATP synthesis. This Astronotus ocellatus (Oscar) protein is Cytochrome b (mt-cyb).